The chain runs to 212 residues: Nitrile hydratase subunit beta (212 aa).

This sequence belongs to the nitrile hydratase subunit beta family. As to quaternary structure, heterodimer of an alpha and a beta chain.

It catalyses the reaction an aliphatic primary amide = an aliphatic nitrile + H2O. NHase catalyzes the hydration of various nitrile compounds to the corresponding amides. This Rhodococcus erythropolis (Arthrobacter picolinophilus) protein is Nitrile hydratase subunit beta (nthB).